Consider the following 314-residue polypeptide: MKQNAKISLIGSGNIGGTLAHLISLRELGDIVLFDVTEGVPQGKALDLMQAGTIAGSDIKIKGTNDYKDIEGSDAIIITAGLPRKPGMSREDLISINTGIMKTVAANVKKYAPDAFVIVITNPLDVMVYVMLKESGLPHNKVIGMAGVLDSSRFNLFLAEEFKVSVNNVNSMVLGGHGDAMVPLARYSTISGVPIPDLIKMGLSSNENIEKIIDRTRNGGGEIVALLKTGSAYYAPAASAIEMLESYLKDKRQILTCAAHLQGEYGVHDLYVGVPIMIGKEGVLRVIELQLTAEEKALFDKSVEGVKKLIETIK.

NAD(+)-binding positions include 11-16 (GSGNIG) and Asp35. Substrate-binding residues include Arg84 and Arg90. NAD(+) contacts are provided by residues Asn97 and 120-122 (ITN). Substrate-binding residues include Asn122 and Arg153. His177 (proton acceptor) is an active-site residue.

The protein belongs to the LDH/MDH superfamily. MDH type 3 family.

It catalyses the reaction (S)-malate + NAD(+) = oxaloacetate + NADH + H(+). Its function is as follows. Catalyzes the reversible oxidation of malate to oxaloacetate. The sequence is that of Malate dehydrogenase from Rickettsia conorii (strain ATCC VR-613 / Malish 7).